We begin with the raw amino-acid sequence, 98 residues long: Protein translation factor SUI1 homolog (98 aa).

It belongs to the SUI1 family.

This is Protein translation factor SUI1 homolog from Pyrococcus abyssi (strain GE5 / Orsay).